The chain runs to 699 residues: SPX domain-containing membrane protein At4g22990 (699 aa).

The SPX domain maps to 2–145 (VAFGKKLKER…GYRFTNYYVK (144 aa)). 6 helical membrane-spanning segments follow: residues 249–269 (FMSL…TYII), 280–300 (LGAA…AQLF), 317–337 (LIFS…AFDF), 339–358 (SIAV…ARAV), 377–397 (AGFV…AGLL), and 413–433 (LPGW…AISF). The segment covering 475 to 490 (IEEQGEDECDGSEEAS) has biased composition (acidic residues). The disordered stretch occupies residues 475–494 (IEEQGEDECDGSEEASEDSR). A run of 5 helical transmembrane segments spans residues 515–535 (LLIY…SSVI), 546–566 (SVAI…LVVG), 578–598 (ILLV…HVVV), 606–626 (VCSG…NLSL), and 671–691 (MLLN…IVAT).

The protein belongs to the major facilitator superfamily.

The protein resides in the membrane. This is SPX domain-containing membrane protein At4g22990 from Arabidopsis thaliana (Mouse-ear cress).